Consider the following 651-residue polypeptide: Coronin-like protein (651 aa).

WD repeat units follow at residues 79–110, 138–169, 180–210, and 226–257; these read GHTA…GIWD, GHAR…KLWN, KHPD…RVWN, and AKNQ…GIWD. The interval 408–609 is disordered; sequence APSFHEAKRP…TSPKSLGLKK (202 aa). Basic and acidic residues predominate over residues 427 to 451; sequence LEEKKEQPKVEKPISESEKEVKQEA. Residues Ser441, Ser454, and Ser456 each carry the phosphoserine modification. Over residues 452-465 the composition is skewed to low complexity; it reads PKSPSPLKSASSSS. 2 positions are modified to phosphothreonine: Thr517 and Thr529. 2 stretches are compositionally biased toward basic and acidic residues: residues 523 to 540 and 547 to 572; these read ETKK…ELKP and TDRK…EQEK. 2 positions are modified to phosphoserine: Ser573 and Ser579. Residues 578–590 are compositionally biased toward low complexity; the sequence is SSITAAKTAITAS. The stretch at 618–650 forms a coiled coil; it reads VLQLEDVVDKLTKANLDKDERLLKLEQKIGELS.

The protein belongs to the WD repeat coronin family. As to quaternary structure, binds to F-actin.

In Saccharomyces cerevisiae (strain ATCC 204508 / S288c) (Baker's yeast), this protein is Coronin-like protein (CRN1).